Reading from the N-terminus, the 306-residue chain is Lymphotoxin-beta (306 aa).

Topologically, residues 1–27 are cytoplasmic; the sequence is MGTRGLQGLGGRPQGRGCLLLAVAGAT. The chain crosses the membrane as a helical; Signal-anchor for type II membrane protein span at residues 28–48; that stretch reads SLVTLLLAVPITVLAVLALVP. The Extracellular segment spans residues 49-306; that stretch reads QDQGRRVEKI…KTFFGAVMVG (258 aa). Disordered regions lie at residues 63–112 and 127–151; these read AQAQ…GPVA and PAAD…DLNP. The segment covering 74-85 has biased composition (low complexity); it reads PSCILPSPSSLS. Positions 95–112 are enriched in polar residues; it reads QRSNASRNLASTSQGPVA. Asn98 carries N-linked (GlcNAc...) asparagine glycosylation. The 152-residue stretch at 154–305 folds into the THD domain; that stretch reads PAAHLIGAWM…GKTFFGAVMV (152 aa). A glycan (N-linked (GlcNAc...) asparagine) is linked at Asn284.

It belongs to the tumor necrosis factor family. Heterotrimer of either two LTB and one LTA subunits or (less prevalent) two LTA and one LTB subunits.

The protein resides in the membrane. In terms of biological role, cytokine that binds to LTBR/TNFRSF3. May play a specific role in immune response regulation. Provides the membrane anchor for the attachment of the heterotrimeric complex to the cell surface. In Mus musculus (Mouse), this protein is Lymphotoxin-beta (Ltb).